Here is a 513-residue protein sequence, read N- to C-terminus: MLDDVAFIKTPAAKKQPPASNECGVWTTDSPAIHNAPLPADGPGSTSFSNTILFSILALVPGYITYKLGLGFKTWVFFFLILAIPILMAYWSIMSTFSPRINEKVKYPNRPISYYLEFHTPELKAKYETSNGGKGSKIPIETFQELYFDGKVSFKGDCLDVLEYKHDWASFRFTLGLFRFFLLGMIPEVIFHSQSQDEEQVRDHYDRGDDFYTWFLGPRMIYTSGVISDITREETLEELQDNKLTVMADKIDLKKGDHVLDIGCGWGTWTTFASSKYGANVTGITLGRNQTKWGNTLLKEYGIPSDQSRIVCCDYRDAPKSSKPSGKYDKITSVEMAEHVGIRRLTAYLEQCRDALEDDGLLFLQYSGLRKNWQYEDLEWGLFMNKYIFPGADASTPLSFFASCMESVGFEIVSVDNIGVHYSATLWRWYRNWIGNKDKVVNKYGVKWYRIWEFFLGSSVVASRNGTATCYQFICRKNINSYRRIDYVPQQKGLQGPVQEGTKWAKEFTNFYD.

2 consecutive transmembrane segments (helical) span residues 52–72 and 74–94; these read ILFSILALVPGYITYKLGLGF and TWVFFFLILAIPILMAYWSIM. S-adenosyl-L-methionine contacts are provided by residues 222-223, 259-267, 285-290, and 315-316; these read YT, VLDIGCGWG, TLGRNQ, and YR.

The protein belongs to the CFA/CMAS family.

Its subcellular location is the membrane. It catalyses the reaction a (4E,8E)-4-sphinga-4,8-dienine ceramide + S-adenosyl-L-methionine = a 9-methyl-(4E,8E)-sphinga-4,8-dienine ceramide + S-adenosyl-L-homocysteine + H(+). Its pathway is lipid metabolism; sphingolipid metabolism. Its function is as follows. Catalyzes methylation of the sphingoid base component of glucosylceramides (GluCers) at the C9-position. Sphingolipid C9-methylation requires 4,8-desaturated ceramides as substrates. Glucosylceramides play important roles in growth, differentiation and pathogenicity. The methyl group at the C9-position distinguishes fungal glucosylceramides from those of plants and animals, and may thus play a role in host-pathogen interactions enabling the host to recognize the fungal attack and initiate specific defense responses. Not necessary for vegetative growth at low temperatures, but plays a role in hyphal formation on solid medium. The sequence is that of Sphingolipid C9-methyltransferase from Candida albicans (strain SC5314 / ATCC MYA-2876) (Yeast).